The following is a 422-amino-acid chain: UDP-N-acetylglucosamine 1-carboxyvinyltransferase (422 aa).

22 to 23 (KN) is a phosphoenolpyruvate binding site. UDP-N-acetyl-alpha-D-glucosamine is bound at residue R93. The active-site Proton donor is C117. Residue C117 is modified to 2-(S-cysteinyl)pyruvic acid O-phosphothioketal. Residues 122 to 126 (RPVDL), 162 to 165 (KVSV), D307, and I329 contribute to the UDP-N-acetyl-alpha-D-glucosamine site.

It belongs to the EPSP synthase family. MurA subfamily.

The protein resides in the cytoplasm. The catalysed reaction is phosphoenolpyruvate + UDP-N-acetyl-alpha-D-glucosamine = UDP-N-acetyl-3-O-(1-carboxyvinyl)-alpha-D-glucosamine + phosphate. Its pathway is cell wall biogenesis; peptidoglycan biosynthesis. Functionally, cell wall formation. Adds enolpyruvyl to UDP-N-acetylglucosamine. The protein is UDP-N-acetylglucosamine 1-carboxyvinyltransferase of Hamiltonella defensa subsp. Acyrthosiphon pisum (strain 5AT).